The primary structure comprises 353 residues: 2-Hydroxyacid oxidase 2 (353 aa).

The region spanning 2–353 (PLVCLADFKA…SPDLIQFSRL (352 aa)) is the FMN hydroxy acid dehydrogenase domain. FMN contacts are provided by residues 77–79 (PTA), Ser-106, and Gln-128. A 2-oxocarboxylate is bound at residue Tyr-130. Ser-133 is modified (phosphoserine). Thr-156 contacts FMN. Arg-165 provides a ligand contact to a 2-oxocarboxylate. Lys-224 lines the FMN pocket. The active-site Proton acceptor is His-248. A 2-oxocarboxylate is bound at residue Arg-251. FMN is bound by residues 279-283 (DGGVR) and 302-303 (GR). The Microbody targeting signal motif lies at 351 to 353 (SRL).

Belongs to the FMN-dependent alpha-hydroxy acid dehydrogenase family. As to quaternary structure, homotetramer. Could also form homooctamer. It depends on FMN as a cofactor. In terms of tissue distribution, expressed in kidney.

The protein localises to the peroxisome. It catalyses the reaction a (2S)-2-hydroxycarboxylate + O2 = a 2-oxocarboxylate + H2O2. It carries out the reaction 2-hydroxyoctanoate + O2 = 2-oxooctanoate + H2O2. The catalysed reaction is 2-hydroxyhexadecanoate + O2 = 2-oxohexadecanoate + H2O2. The enzyme catalyses 2-hydroxyhexanoate + O2 = 2-oxohexanoate + H2O2. It catalyses the reaction mandelate + O2 = phenylglyoxylate + H2O2. With respect to regulation, is inhibited in vitro by CCPST (4-carboxy-5-(4-chlorophenyl)sulfanyl-1,2,3-thiadiazole). Its function is as follows. Oxidase that catalyzes the oxidation of medium and long chain hydroxyacids such as 2-hydroxyhexadecanoate, 2-hydroxyoctanoate, 2-hydroxyhexanoate and 2-hydroxybutanoate, to the correspondong 2-oxoacids. Its role in the oxidation of 2-hydroxy fatty acids may contribute to the general pathway of fatty acid alpha-oxidation. Can also use mandelate as substrate. Active in vitro with the artificial electron acceptor 2,6-dichlorophenolindophenol (DCIP), but O2 is believed to be the physiological electron acceptor, leading to the production of H2O2. This is 2-Hydroxyacid oxidase 2 (Hao2) from Rattus norvegicus (Rat).